Here is a 716-residue protein sequence, read N- to C-terminus: Probable glutamate--tRNA ligase, cytoplasmic (716 aa).

Position 190 is a phosphoserine (Ser190). 210 to 212 (RFP) contributes to the L-glutamate binding site. A 'HIGH' region motif is present at residues 215–224 (PSGYLHIGHA). His220 contacts ATP. Residues Asp246, 386-390 (YDFAC), and Arg404 contribute to the L-glutamate site. ATP-binding positions include Glu407 and 441-445 (LLSKR). Residues 441–445 (LLSKR) carry the 'KMSKS' region motif.

Belongs to the class-I aminoacyl-tRNA synthetase family. Glutamate--tRNA ligase type 2 subfamily. In terms of assembly, component of a yeast aminoacyl-tRNA synthase (aaRS) complex formed by methionyl-tRNA synthase, glutamyl-tRNA synthase and the tRNA aminoacylation cofactor arc1 in a stoichiometric complex. Interacts with arc1/SPAC30C2.04.

The protein resides in the cytoplasm. It localises to the nucleus. It catalyses the reaction tRNA(Glu) + L-glutamate + ATP = L-glutamyl-tRNA(Glu) + AMP + diphosphate. Its function is as follows. Catalyzes the attachment of glutamate to tRNA(Glu) in a two-step reaction: glutamate is first activated by ATP to form Glu-AMP and then transferred to the acceptor end of tRNA(Glu). This Schizosaccharomyces pombe (strain 972 / ATCC 24843) (Fission yeast) protein is Probable glutamate--tRNA ligase, cytoplasmic (gus1).